The sequence spans 211 residues: Probable nicotinate-nucleotide adenylyltransferase (211 aa).

This sequence belongs to the NadD family.

It carries out the reaction nicotinate beta-D-ribonucleotide + ATP + H(+) = deamido-NAD(+) + diphosphate. The protein operates within cofactor biosynthesis; NAD(+) biosynthesis; deamido-NAD(+) from nicotinate D-ribonucleotide: step 1/1. Catalyzes the reversible adenylation of nicotinate mononucleotide (NaMN) to nicotinic acid adenine dinucleotide (NaAD). The polypeptide is Probable nicotinate-nucleotide adenylyltransferase (Lactiplantibacillus plantarum (strain ATCC BAA-793 / NCIMB 8826 / WCFS1) (Lactobacillus plantarum)).